Reading from the N-terminus, the 448-residue chain is Beta-glucosidase A (448 aa).

Residue E166 is the Proton donor of the active site. Catalysis depends on E355, which acts as the Nucleophile.

It belongs to the glycosyl hydrolase 1 family.

It carries out the reaction Hydrolysis of terminal, non-reducing beta-D-glucosyl residues with release of beta-D-glucose.. It participates in glycan metabolism; cellulose degradation. This chain is Beta-glucosidase A (bglA), found in Acetivibrio thermocellus (strain ATCC 27405 / DSM 1237 / JCM 9322 / NBRC 103400 / NCIMB 10682 / NRRL B-4536 / VPI 7372) (Clostridium thermocellum).